Consider the following 341-residue polypeptide: Glyceraldehyde-3-phosphate dehydrogenase, cytosolic (341 aa).

NAD(+) is bound by residues 15-16 (RI), aspartate 37, and arginine 84. D-glyceraldehyde 3-phosphate contacts are provided by residues 155–157 (SCT), threonine 186, 215–216 (TG), and arginine 238. Cysteine 156 serves as the catalytic Nucleophile. Asparagine 320 is an NAD(+) binding site.

This sequence belongs to the glyceraldehyde-3-phosphate dehydrogenase family. Homotetramer.

It localises to the cytoplasm. It carries out the reaction D-glyceraldehyde 3-phosphate + phosphate + NAD(+) = (2R)-3-phospho-glyceroyl phosphate + NADH + H(+). The protein operates within carbohydrate degradation; glycolysis; pyruvate from D-glyceraldehyde 3-phosphate: step 1/5. Functionally, key enzyme in glycolysis that catalyzes the first step of the pathway by converting D-glyceraldehyde 3-phosphate (G3P) into 3-phospho-D-glyceroyl phosphate. Essential for the maintenance of cellular ATP levels and carbohydrate metabolism. This is Glyceraldehyde-3-phosphate dehydrogenase, cytosolic (GAPC) from Magnolia liliiflora (Mulan magnolia).